Here is a 267-residue protein sequence, read N- to C-terminus: MAKVPDLFEDLKNCFSENEEYSSAIDHLSLNQKSFYDASYEPLHEDCMNKVVSLSTSETSVSPNLTFQENVVAVTASGKILKKRRLSLNQPITDVDLETNVSDPEEGIIKPRSVPYTFQRNMRYKYLRIIKQEFTLNDALNQSLVRDTSDQYLRAAPLQNLGDAVKFDMGVYMTSEDSILPVTLRISQTPLFVSAQNEDEPVLLKEMPETPRIITDSESDILFFWETQGNKNYFKSAANPQLFIATKPEHLVHMARGLPSMTDFQIS.

Residues 1–112 (MAKVPDLFED…DPEEGIIKPR (112 aa)) constitute a propeptide that is removed on maturation. Residue Asn-64 is glycosylated (N-linked (GlcNAc...) asparagine). The residue at position 82 (Lys-82) is an N6-acetyllysine. A nuclear localization signal (NLS) region spans residues 82-86 (KKRRL). Ser-87 carries the phosphoserine modification. N-linked (GlcNAc...) asparagine glycans are attached at residues Asn-100 and Asn-141.

This sequence belongs to the IL-1 family. In terms of assembly, monomer. Interacts with TMED10; the interaction mediates the translocation from the cytoplasm into the ERGIC (endoplasmic reticulum-Golgi intermediate compartment) and thereby secretion. Interacts with IL1R1. Interacts with S100A13; this interaction is the first step in the export of IL1A, followed by direct translocation of this complex across the plasma membrane. Acetylated within its nuclear localization sequence, which impacts subcellular localization. In terms of processing, proteolytic processed by CAPN1 in a calcium-dependent manner. Cleavage from 31 kDa precursor to 18 kDa biologically active molecules. Post-translationally, phosphorylated. Phosphorylation greatly enhances susceptibility to digestion and promotes the conversion of pre-IL1A alpha to the biologically active IL1A.

It localises to the nucleus. It is found in the cytoplasm. Its subcellular location is the secreted. In terms of biological role, cytokine constitutively present intracellularly in nearly all resting non-hematopoietic cells that plays an important role in inflammation and bridges the innate and adaptive immune systems. After binding to its receptor IL1R1 together with its accessory protein IL1RAP, forms the high affinity interleukin-1 receptor complex. Signaling involves the recruitment of adapter molecules such as MYD88, IRAK1 or IRAK4. In turn, mediates the activation of NF-kappa-B and the three MAPK pathways p38, p42/p44 and JNK pathways. Within the cell, acts as an alarmin and cell death results in its liberation in the extracellular space after disruption of the cell membrane to induce inflammation and alert the host to injury or damage. In addition to its role as a danger signal, which occurs when the cytokine is passively released by cell necrosis, directly senses DNA damage and acts as signal for genotoxic stress without loss of cell integrity. The sequence is that of Interleukin-1 alpha (IL1A) from Oryctolagus cuniculus (Rabbit).